The sequence spans 294 residues: Acetylglutamate kinase (294 aa).

Residues 63–64, R85, and N188 each bind substrate; that span reads GG.

This sequence belongs to the acetylglutamate kinase family. ArgB subfamily.

Its subcellular location is the cytoplasm. It catalyses the reaction N-acetyl-L-glutamate + ATP = N-acetyl-L-glutamyl 5-phosphate + ADP. It functions in the pathway amino-acid biosynthesis; L-arginine biosynthesis; N(2)-acetyl-L-ornithine from L-glutamate: step 2/4. In terms of biological role, catalyzes the ATP-dependent phosphorylation of N-acetyl-L-glutamate. This Methanococcus vannielii (strain ATCC 35089 / DSM 1224 / JCM 13029 / OCM 148 / SB) protein is Acetylglutamate kinase.